Reading from the N-terminus, the 442-residue chain is tRNA-2-methylthio-N(6)-dimethylallyladenosine synthase (442 aa).

An MTTase N-terminal domain is found at 2 to 117 (KSLYIKTYGC…LPELIVKASR (116 aa)). Residues C11, C47, C80, C157, C161, and C164 each contribute to the [4Fe-4S] cluster site. The Radical SAM core domain occupies 143–374 (NSQGSSAFLS…QKLINKQQLE (232 aa)). The TRAM domain occupies 377-441 (QSMVGKTIPV…QNSLLGRELQ (65 aa)).

Belongs to the methylthiotransferase family. MiaB subfamily. In terms of assembly, monomer. The cofactor is [4Fe-4S] cluster.

The protein localises to the cytoplasm. The catalysed reaction is N(6)-dimethylallyladenosine(37) in tRNA + (sulfur carrier)-SH + AH2 + 2 S-adenosyl-L-methionine = 2-methylsulfanyl-N(6)-dimethylallyladenosine(37) in tRNA + (sulfur carrier)-H + 5'-deoxyadenosine + L-methionine + A + S-adenosyl-L-homocysteine + 2 H(+). Its function is as follows. Catalyzes the methylthiolation of N6-(dimethylallyl)adenosine (i(6)A), leading to the formation of 2-methylthio-N6-(dimethylallyl)adenosine (ms(2)i(6)A) at position 37 in tRNAs that read codons beginning with uridine. The chain is tRNA-2-methylthio-N(6)-dimethylallyladenosine synthase from Wolbachia sp. subsp. Brugia malayi (strain TRS).